A 126-amino-acid polypeptide reads, in one-letter code: Small ribosomal subunit protein uS13 (126 aa).

The tract at residues 95-126 (GLPVRGQRTHTNARTRKGPRKTVAGKKKPGKK) is disordered.

It belongs to the universal ribosomal protein uS13 family. As to quaternary structure, part of the 30S ribosomal subunit. Forms a loose heterodimer with protein S19. Forms two bridges to the 50S subunit in the 70S ribosome.

Its function is as follows. Located at the top of the head of the 30S subunit, it contacts several helices of the 16S rRNA. In the 70S ribosome it contacts the 23S rRNA (bridge B1a) and protein L5 of the 50S subunit (bridge B1b), connecting the 2 subunits; these bridges are implicated in subunit movement. Contacts the tRNAs in the A and P-sites. The chain is Small ribosomal subunit protein uS13 from Acidothermus cellulolyticus (strain ATCC 43068 / DSM 8971 / 11B).